The primary structure comprises 166 residues: Large ribosomal subunit protein uL10 (166 aa).

It belongs to the universal ribosomal protein uL10 family. As to quaternary structure, part of the ribosomal stalk of the 50S ribosomal subunit. The N-terminus interacts with L11 and the large rRNA to form the base of the stalk. The C-terminus forms an elongated spine to which L12 dimers bind in a sequential fashion forming a multimeric L10(L12)X complex.

Functionally, forms part of the ribosomal stalk, playing a central role in the interaction of the ribosome with GTP-bound translation factors. In Hydrogenovibrio crunogenus (strain DSM 25203 / XCL-2) (Thiomicrospira crunogena), this protein is Large ribosomal subunit protein uL10.